We begin with the raw amino-acid sequence, 199 residues long: 5'-deoxynucleotidase YfbR (199 aa).

Residues 18–19 (RW) and H33 contribute to the substrate site. An HD domain is found at 30 to 142 (VSEHSLQVAM…VKQADALCAY (113 aa)). A divalent metal cation is bound by residues H33, H68, and D69. Substrate contacts are provided by residues D69, 77-80 (DLPT), and D137. An a divalent metal cation-binding site is contributed by D137.

Belongs to the 5DNU family. As to quaternary structure, homodimer. Requires a divalent metal cation as cofactor.

It is found in the cytoplasm. The catalysed reaction is a 2'-deoxyribonucleoside 5'-phosphate + H2O = a 2'-deoxyribonucleoside + phosphate. Catalyzes the strictly specific dephosphorylation of 2'-deoxyribonucleoside 5'-monophosphates. In Salmonella agona (strain SL483), this protein is 5'-deoxynucleotidase YfbR.